The following is a 61-amino-acid chain: MTMNKPKTNYAGYACCVICGLIVGIIFTATLLKAVERKLIHTPLIDKTIKDAYIREDCPTD.

The Cytoplasmic segment spans residues Met1–Ala11. A helical; Signal-anchor for type II membrane protein transmembrane segment spans residues Gly12–Leu32. Residues Lys33–Asp61 lie on the Extracellular side of the membrane.

It belongs to the poxviridae A40 protein family.

The protein localises to the host membrane. This chain is Protein A40 homolog (A45R), found in Homo sapiens (Human).